We begin with the raw amino-acid sequence, 260 residues long: Acetylglutamate kinase (260 aa).

Residues Gly-46–Gly-47, Arg-68, and Asn-160 each bind substrate.

The protein belongs to the acetylglutamate kinase family. ArgB subfamily.

It localises to the cytoplasm. It catalyses the reaction N-acetyl-L-glutamate + ATP = N-acetyl-L-glutamyl 5-phosphate + ADP. Its pathway is amino-acid biosynthesis; L-arginine biosynthesis; N(2)-acetyl-L-ornithine from L-glutamate: step 2/4. Its function is as follows. Catalyzes the ATP-dependent phosphorylation of N-acetyl-L-glutamate. The protein is Acetylglutamate kinase of Shewanella sp. (strain MR-7).